A 127-amino-acid polypeptide reads, in one-letter code: Protein translocase subunit SecE (127 aa).

Transmembrane regions (helical) follow at residues 16 to 36 (IAKW…NHYY), 42 to 62 (IFQN…IFLT), and 98 to 118 (IIVT…LIWF).

Belongs to the SecE/SEC61-gamma family. As to quaternary structure, component of the Sec protein translocase complex. Heterotrimer consisting of SecY, SecE and SecG subunits. The heterotrimers can form oligomers, although 1 heterotrimer is thought to be able to translocate proteins. Interacts with the ribosome. Interacts with SecDF, and other proteins may be involved. Interacts with SecA.

The protein resides in the cell membrane. Essential subunit of the Sec protein translocation channel SecYEG. Clamps together the 2 halves of SecY. May contact the channel plug during translocation. This Buchnera aphidicola subsp. Baizongia pistaciae (strain Bp) protein is Protein translocase subunit SecE.